Reading from the N-terminus, the 646-residue chain is Wee1-like protein kinase (646 aa).

The interval 1-181 (MSFLSRQQPP…GTPPHKTFRK (181 aa)) is disordered. Acidic residues predominate over residues 32-43 (DCEEEEEEEEEE). Position 53 is a phosphoserine; by PLK1 (S53). S78 and S85 each carry phosphoserine. The segment covering 94–103 (LLPGACPGAD) has biased composition (low complexity). S123 is modified (phosphoserine; by CDK1). S127, S137, S139, S150, and S165 each carry phosphoserine. Residues 158–170 (RAGEGRRSPRPDH) show a composition bias toward basic and acidic residues. Residues T187, T190, and T239 each carry the phosphothreonine modification. Residues S270, S307, and S312 each carry the phosphoserine modification. The Protein kinase domain occupies 299-569 (FHELEKIGSG…AMALVKHSVL (271 aa)). ATP-binding positions include 305–313 (IGSGEFGSV) and K328. N342 provides a ligand contact to Mg(2+). D426 (proton acceptor) is an active-site residue. Mg(2+) is bound by residues N431, D463, and G465. A Phosphoserine; by BRSK1 and BRSK2 modification is found at S642.

It belongs to the protein kinase superfamily. Ser/Thr protein kinase family. WEE1 subfamily. Requires Mg(2+) as cofactor. Post-translationally, phosphorylated during M and G1 phases. Also autophosphorylated. Phosphorylation at Ser-642 by BRSK1 and BRSK2 in post-mitotic neurons, leads to down-regulate WEE1 activity in polarized neurons. Phosphorylated at Ser-53 and Ser-123 by PLK1 and CDK1, respectively, generating an signal for degradation that can be recognized by the SCF(BTRC) complex, leading to its ubiquitination and degradation at the onset of G2/M phase. In terms of processing, dephosphorylated at Thr-239 by CTDP1. Dephosphorylated at Ser-53 and Ser-123 by the serine/threonine-protein phosphatase 2A preventing its ubiquitin-mediated degradation. Ubiquitinated and degraded at the onset of G2/M phase.

The protein resides in the nucleus. It catalyses the reaction L-tyrosyl-[protein] + ATP = O-phospho-L-tyrosyl-[protein] + ADP + H(+). Its activity is regulated as follows. Synthesis is increased during S and G2 phases, presumably by an increase in transcription; activity is decreased by phosphorylation during M phase. Protein levels fall in M phase as a result of decreased synthesis combined with degradation. Activity seems to be negatively regulated by phosphorylation upon entry into mitosis, although N-terminal phosphorylation might also regulate the protein stability via protection from proteolysis or might regulate the subcellular location. In terms of biological role, acts as a negative regulator of entry into mitosis (G2 to M transition) by protecting the nucleus from cytoplasmically activated cyclin B1-complexed CDK1 before the onset of mitosis by mediating phosphorylation of CDK1 on 'Tyr-15'. Specifically phosphorylates and inactivates cyclin B1-complexed CDK1 reaching a maximum during G2 phase and a minimum as cells enter M phase. Phosphorylation of cyclin B1-CDK1 occurs exclusively on 'Tyr-15' and phosphorylation of monomeric CDK1 does not occur. Its activity increases during S and G2 phases and decreases at M phase when it is hyperphosphorylated. A correlated decrease in protein level occurs at M/G1 phase, probably due to its degradation. The polypeptide is Wee1-like protein kinase (Homo sapiens (Human)).